The primary structure comprises 140 residues: Ribosomal RNA large subunit methyltransferase H (140 aa).

S-adenosyl-L-methionine contacts are provided by residues Leu58, Gly90, and 108–113 (LSLLTF).

Belongs to the RNA methyltransferase RlmH family. As to quaternary structure, homodimer.

Its subcellular location is the cytoplasm. It catalyses the reaction pseudouridine(1915) in 23S rRNA + S-adenosyl-L-methionine = N(3)-methylpseudouridine(1915) in 23S rRNA + S-adenosyl-L-homocysteine + H(+). Its function is as follows. Specifically methylates the pseudouridine at position 1915 (m3Psi1915) in 23S rRNA. The protein is Ribosomal RNA large subunit methyltransferase H of Protochlamydia amoebophila (strain UWE25).